Here is a 182-residue protein sequence, read N- to C-terminus: MQLNIPTWLTLFRVVLIPFFVLAFYLPFVWAPMVCAIIFVFAAATDWFDGFLARRWKQTTRFGAFLDPVADKVMVAIALVLVAEHYHVWWITLPAATMIAREIIISSLREWMAEIGKRSSVAVSWIGKVKTTAQMGSLVGLLWRPDHNIELASFVLLYIAAVLTFWSMFQYLNAAWKDLLEP.

At 1–12 (MQLNIPTWLTLF) the chain is on the cytoplasmic side. The chain crosses the membrane as a helical span at residues 13 to 37 (RVVLIPFFVLAFYLPFVWAPMVCAI). The Periplasmic portion of the chain corresponds to 38–60 (IFVFAAATDWFDGFLARRWKQTT). The helical transmembrane segment at 61 to 81 (RFGAFLDPVADKVMVAIALVL) threads the bilayer. Over 82–86 (VAEHY) the chain is Cytoplasmic. Residues 87–107 (HVWWITLPAATMIAREIIISS) form a helical membrane-spanning segment. The Periplasmic portion of the chain corresponds to 108–145 (LREWMAEIGKRSSVAVSWIGKVKTTAQMGSLVGLLWRP). The helical transmembrane segment at 146 to 168 (DHNIELASFVLLYIAAVLTFWSM) threads the bilayer. At 169-181 (FQYLNAAWKDLLE) the chain is on the cytoplasmic side.

Belongs to the CDP-alcohol phosphatidyltransferase class-I family.

It is found in the cell inner membrane. The enzyme catalyses a CDP-1,2-diacyl-sn-glycerol + sn-glycerol 3-phosphate = a 1,2-diacyl-sn-glycero-3-phospho-(1'-sn-glycero-3'-phosphate) + CMP + H(+). Its pathway is phospholipid metabolism; phosphatidylglycerol biosynthesis; phosphatidylglycerol from CDP-diacylglycerol: step 1/2. Its function is as follows. Catalyzes the conversion of cytidine diphosphate diacylglycerol (CDP-DG) and glycerol 3-phosphate into phosphatidylglycerol. Essential for the synthesis of anionic phospholipids, thereby playing a role in balancing the ratio of zwitterionic and anionic phospholipids, which is thought to be important for normal membrane function. This is CDP-diacylglycerol--glycerol-3-phosphate 3-phosphatidyltransferase from Yersinia enterocolitica serotype O:8 / biotype 1B (strain NCTC 13174 / 8081).